Here is a 68-residue protein sequence, read N- to C-terminus: Putative membrane protein insertion efficiency factor (68 aa).

Belongs to the UPF0161 family.

The protein localises to the cell inner membrane. Its function is as follows. Could be involved in insertion of integral membrane proteins into the membrane. The protein is Putative membrane protein insertion efficiency factor of Hydrogenobaculum sp. (strain Y04AAS1).